A 148-amino-acid chain; its full sequence is Myosin light chain 3, skeletal muscle isoform (148 aa).

Threonine 1 is modified (N-acetylthreonine). 2 consecutive EF-hand domains span residues 6–41 (DQIEDFKEAFGLFDRIGDSQVAFNQVADIMRALGQN) and 82–117 (GTYDDYVEGLRVFDKEGNGTVMGAELRIVLSTLGEK).

In terms of assembly, myosin is a hexamer of 2 heavy chains and 4 light chains.

In Chelon ramada (Thin-lipped grey mullet), this protein is Myosin light chain 3, skeletal muscle isoform.